Reading from the N-terminus, the 119-residue chain is NAD(P)H-quinone oxidoreductase subunit M (119 aa).

The protein belongs to the complex I NdhM subunit family. In terms of assembly, NDH-1 can be composed of about 15 different subunits; different subcomplexes with different compositions have been identified which probably have different functions.

It localises to the cellular thylakoid membrane. The catalysed reaction is a plastoquinone + NADH + (n+1) H(+)(in) = a plastoquinol + NAD(+) + n H(+)(out). The enzyme catalyses a plastoquinone + NADPH + (n+1) H(+)(in) = a plastoquinol + NADP(+) + n H(+)(out). In terms of biological role, NDH-1 shuttles electrons from an unknown electron donor, via FMN and iron-sulfur (Fe-S) centers, to quinones in the respiratory and/or the photosynthetic chain. The immediate electron acceptor for the enzyme in this species is believed to be plastoquinone. Couples the redox reaction to proton translocation, and thus conserves the redox energy in a proton gradient. Cyanobacterial NDH-1 also plays a role in inorganic carbon-concentration. In Crocosphaera subtropica (strain ATCC 51142 / BH68) (Cyanothece sp. (strain ATCC 51142)), this protein is NAD(P)H-quinone oxidoreductase subunit M.